Consider the following 742-residue polypeptide: NAD(P)H-quinone oxidoreductase subunit 5, chloroplastic (742 aa).

The next 16 helical transmembrane spans lie at 9 to 29 (WIIP…LLFF), 39 to 59 (IWAF…MKLA), 91 to 111 (PLTS…LIYS), 125 to 145 (FAYM…SNLI), 147 to 167 (IYIF…FWFT), 185 to 205 (GDFG…SFEF), 224 to 244 (LFCI…SAQF), 258 to 278 (TPIS…FLVA), 280 to 300 (LLPL…IGII), 327 to 347 (LGYM…FHLI), 354 to 374 (ALLF…VGYS), 396 to 416 (TSFL…CFWS), 425 to 445 (WVYS…TAFY), 549 to 569 (LFPL…GIPF), 603 to 623 (FVIN…IAFF), and 721 to 741 (ISSY…IFTF).

Belongs to the complex I subunit 5 family. As to quaternary structure, NDH is composed of at least 16 different subunits, 5 of which are encoded in the nucleus.

The protein localises to the plastid. The protein resides in the chloroplast thylakoid membrane. The enzyme catalyses a plastoquinone + NADH + (n+1) H(+)(in) = a plastoquinol + NAD(+) + n H(+)(out). The catalysed reaction is a plastoquinone + NADPH + (n+1) H(+)(in) = a plastoquinol + NADP(+) + n H(+)(out). Its function is as follows. NDH shuttles electrons from NAD(P)H:plastoquinone, via FMN and iron-sulfur (Fe-S) centers, to quinones in the photosynthetic chain and possibly in a chloroplast respiratory chain. The immediate electron acceptor for the enzyme in this species is believed to be plastoquinone. Couples the redox reaction to proton translocation, and thus conserves the redox energy in a proton gradient. In Spinacia oleracea (Spinach), this protein is NAD(P)H-quinone oxidoreductase subunit 5, chloroplastic (ndhF).